A 185-amino-acid chain; its full sequence is Ribosome-recycling factor (185 aa).

This sequence belongs to the RRF family.

The protein localises to the cytoplasm. In terms of biological role, responsible for the release of ribosomes from messenger RNA at the termination of protein biosynthesis. May increase the efficiency of translation by recycling ribosomes from one round of translation to another. The chain is Ribosome-recycling factor from Carboxydothermus hydrogenoformans (strain ATCC BAA-161 / DSM 6008 / Z-2901).